A 353-amino-acid chain; its full sequence is uncharacterized protein (353 aa).

9 helical membrane passes run 16-36 (AAYIIGFSFLAVSIILGISCG), 77-97 (VVLAALVGAALSIAGAAFQGL), 106-128 (YTLGVSSGASVGAVVTLFLGLHL), 140-160 (SVAAALATMAAVLFFSRLVHA), 167-187 (LILTGVITNSFLGAFISLIIA), 208-228 (GWSYVILFLPFFLLGTILLII), 263-283 (LLTGSAVAVSGTIGFVGLVIP), 296-316 (HLLPLSALLGAGFLVLADLLS), and 323-343 (IELPIGIITSLAGAPVFALIL).

Belongs to the binding-protein-dependent transport system permease family. FecCD subfamily. As to quaternary structure, the complex is composed of two ATP-binding proteins (YvrA), two transmembrane proteins (YvrB) and a solute-binding protein (YvrC).

It is found in the cell membrane. In terms of biological role, probably part of an ABC transporter complex. Probably responsible for the translocation of the substrate across the membrane. This is an uncharacterized protein from Bacillus subtilis (strain 168).